Here is a 384-residue protein sequence, read N- to C-terminus: 1-deoxy-D-xylulose 5-phosphate reductoisomerase (384 aa).

NADPH contacts are provided by threonine 10, glycine 11, serine 12, isoleucine 13, glycine 36, asparagine 38, and asparagine 122. Lysine 123 is a 1-deoxy-D-xylulose 5-phosphate binding site. Glutamate 124 provides a ligand contact to NADPH. Position 148 (aspartate 148) interacts with Mn(2+). Residues serine 149, glutamate 150, serine 174, and histidine 197 each contribute to the 1-deoxy-D-xylulose 5-phosphate site. Glutamate 150 lines the Mn(2+) pocket. An NADPH-binding site is contributed by glycine 203. 1-deoxy-D-xylulose 5-phosphate-binding residues include serine 210, asparagine 215, lysine 216, and glutamate 219. Glutamate 219 provides a ligand contact to Mn(2+).

This sequence belongs to the DXR family. The cofactor is Mg(2+). It depends on Mn(2+) as a cofactor.

The catalysed reaction is 2-C-methyl-D-erythritol 4-phosphate + NADP(+) = 1-deoxy-D-xylulose 5-phosphate + NADPH + H(+). The protein operates within isoprenoid biosynthesis; isopentenyl diphosphate biosynthesis via DXP pathway; isopentenyl diphosphate from 1-deoxy-D-xylulose 5-phosphate: step 1/6. Its function is as follows. Catalyzes the NADPH-dependent rearrangement and reduction of 1-deoxy-D-xylulose-5-phosphate (DXP) to 2-C-methyl-D-erythritol 4-phosphate (MEP). The chain is 1-deoxy-D-xylulose 5-phosphate reductoisomerase from Geotalea daltonii (strain DSM 22248 / JCM 15807 / FRC-32) (Geobacter daltonii).